The following is a 479-amino-acid chain: Ribosomal RNA small subunit methyltransferase F (479 aa).

Residues 125–131, E149, D176, and D194 each bind S-adenosyl-L-methionine; that span reads AAAPGSK. Residue C247 is the Nucleophile of the active site.

This sequence belongs to the class I-like SAM-binding methyltransferase superfamily. RsmB/NOP family.

The protein localises to the cytoplasm. The catalysed reaction is cytidine(1407) in 16S rRNA + S-adenosyl-L-methionine = 5-methylcytidine(1407) in 16S rRNA + S-adenosyl-L-homocysteine + H(+). In terms of biological role, specifically methylates the cytosine at position 1407 (m5C1407) of 16S rRNA. In Shigella boydii serotype 18 (strain CDC 3083-94 / BS512), this protein is Ribosomal RNA small subunit methyltransferase F.